Here is a 317-residue protein sequence, read N- to C-terminus: Signal recognition particle receptor FtsY (317 aa).

Residues 117–124, 199–203, and 263–266 each bind GTP; these read GVNGVGKT, DTAGR, and TKLD.

This sequence belongs to the GTP-binding SRP family. FtsY subfamily. Part of the signal recognition particle protein translocation system, which is composed of SRP and FtsY.

The protein localises to the cell membrane. Its subcellular location is the cytoplasm. It carries out the reaction GTP + H2O = GDP + phosphate + H(+). Involved in targeting and insertion of nascent membrane proteins into the cytoplasmic membrane. Acts as a receptor for the complex formed by the signal recognition particle (SRP) and the ribosome-nascent chain (RNC). This chain is Signal recognition particle receptor FtsY, found in Deinococcus radiodurans (strain ATCC 13939 / DSM 20539 / JCM 16871 / CCUG 27074 / LMG 4051 / NBRC 15346 / NCIMB 9279 / VKM B-1422 / R1).